Consider the following 434-residue polypeptide: 26S proteasome regulatory subunit 6A (434 aa).

Alanine 2 carries the post-translational modification N-acetylalanine. The residue at position 180 (tyrosine 180) is a Phosphotyrosine. Position 222–229 (222–229 (GPPGTGKT)) interacts with ATP.

It belongs to the AAA ATPase family. Post-translationally, N-acetylated by NAT1.

It localises to the cytoplasm. Its subcellular location is the nucleus. The 26S proteasome is involved in the ATP-dependent degradation of ubiquitinated proteins. The regulatory (or ATPase) complex confers ATP dependency and substrate specificity to the 26S complex. In Saccharomyces cerevisiae (strain ATCC 204508 / S288c) (Baker's yeast), this protein is 26S proteasome regulatory subunit 6A (RPT5).